Consider the following 447-residue polypeptide: UDP-N-acetyl-alpha-D-muramoyl-L-alanyl-L-glutamate epimerase (447 aa).

It belongs to the MurL family.

It carries out the reaction UDP-N-acetyl-alpha-D-muramoyl-L-alanyl-L-glutamate + ATP + H2O = UDP-N-acetyl-alpha-D-muramoyl-L-alanyl-D-glutamate + AMP + diphosphate + H(+). The protein operates within cell wall biogenesis; peptidoglycan biosynthesis. In terms of biological role, cell wall formation. Catalyzes epimerization of the terminal L-glutamate in UDP-N-acetyl-alpha-D-muramoyl-L-alanyl-L-glutamate. The protein is UDP-N-acetyl-alpha-D-muramoyl-L-alanyl-L-glutamate epimerase of Micromonospora sp. (strain ATCC 39149 / NRRL 15099 / SCC 1413).